The primary structure comprises 1331 residues: MQHLLEYMPEDLPVRDTDSSPLLKGTSGKNVRAQPHLGRMNQKELNCRRLHLHEEPTLVKEPSPKQRDKNRRRRTNVQRSTTTQPDLRTLAVLQEPERRRRPWVSASPSPSAPPRAPVPGRKAHVQRLCPSTAVGSAQPRVHAGRRLPHIAGPNDRRSHTAPPAFKDYVADKNTRIEITREPSQLTHTMTTDSTHVEEIPRSPEKTSKVEKPEQRSSEECTQKAAELRASIKENVELIRLKKLLQERNTSLAATEAQLTRVQEAYEDLLQKNQGILDTAHNAFLSQVNELKAELSEESKKAVSLRTQLGDVSILQITLKEFQVRVEDLEKERKLLSDSYDRLLENMLDSSHQPLDSSHQPHWSTELTGKQLPPQVCPLLDQMGTALEETKVFRQATNKAAQDGKLKFQDTDILYQHEQEEESLQSTATVASSPEELCELAAQPTLLPQTDQRESSEPKAQDENDLSQVLSELQVSHAETTLELEKTRDMLLLQRKINMCYQEELEATLTKADRENRDHEEKLERLNHLLDFKNSRIKQLEGILRSHGLPTSEQLKDVAYGTLPPSLCLEPLAAHRGDDEVDMSLLHPSENLFELHVHQAFLTPAALTQAGDTQPTTFCTYSFYDFETHCTPLSTGPQPLYDFTSQYVVQADYLLLHYLQGTSVRLDLHQAMASEYHVLATGWISLDKVLGTVERVHGLATLAGAGGEDLGVLEYWMRLCLPLKPSLQACNKRKKAQAYLSVSVLGARKVQSNESRSETWAPQNELRVEITRCCGLRSRRLGRQPSPYVMYRFFTFPDHDTIIIPASSNPYFKDQALFPVLVTSDLDQYLRREALSVYVFDDEDPEPGSYLGRAQVPLLPLAQNKSIKGDFNLTDSGEKSNGSIKVQLDWKSHYLAPEGFQMSEAEKPEGEEKEEEGGEEEVKEEEVEEEEEEEEEEEEVKEEKEEEEEEEREEEEEKEEEKEEEEEEDEKEEEEEEEEEEEEEEEDENKDVLEASFTEEWVPFFSQDQIASTEIPIEAGQYPEKRKPPVIAEKKEREHQVASYSRRKHSKKPGVQDKNRMEYLSCNILNGNTQQMHYTEWKFSGLKKAEDGGLKAQDKREEPPSPRSALRQEHPSHPRNAFSLADQESCEQASEVSETQTTDSDDIIVTPQAQTVPKADSEKMCIEIVSLAFCPEADVMSDETIQQVYVEYKFCDLPLSETETPMSLRKPRAGEEIHFHFSKVIDLDPVEHQSRRQFLFAMLHAQDSDEGRFKFTVVSDPLDEEKKECQDIGYAYLELWQIFQSGKDILEQELEIVSPRNQAIQIGRLKVSLQAAAALHGIYKEMTEDLFS.

Disordered regions lie at residues 1–165 (MQHL…PPAF), 183–220 (SQLT…SEEC), and 351–374 (HQPL…LPPQ). The span at 41–67 (NQKELNCRRLHLHEEPTLVKEPSPKQR) shows a compositional bias: basic and acidic residues. Composition is skewed to polar residues over residues 77-86 (VQRSTTTQPD) and 183-193 (SQLTHTMTTDS). Positions 194-220 (THVEEIPRSPEKTSKVEKPEQRSSEEC) are enriched in basic and acidic residues. Coiled coils occupy residues 236–352 (ELIR…SSHQ) and 498–546 (MCYQ…LRSH). Over residues 351-367 (HQPLDSSHQPHWSTELT) the composition is skewed to polar residues. The region spanning 745 to 870 (GARKVQSNES…AQNKSIKGDF (126 aa)) is the C2 domain. 2 disordered regions span residues 899–1057 (FQMS…VQDK) and 1088–1146 (AEDG…SDDI). Residues 908–999 (EGEEKEEEGG…DVLEASFTEE (92 aa)) are a coiled coil. Over residues 910–988 (EEKEEEGGEE…EEEEEEEDEN (79 aa)) the composition is skewed to acidic residues. 2 stretches are compositionally biased toward basic and acidic residues: residues 1022-1039 (PEKR…REHQ) and 1088-1115 (AEDG…EHPS). Polar residues predominate over residues 1129 to 1141 (CEQASEVSETQTT). Residues 1136-1326 (SETQTTDSDD…ALHGIYKEMT (191 aa)) form an interaction with RPGR region.

It belongs to the RPGRIP1 family. As to quaternary structure, interacts with NPHP4. Interacts with NEK4. Forms homodimers and elongated homopolymers. Interacts with RPGR. Interacts with SPATA7. Interacts with CEP290/NPHP6; mediating the association between RPGR and CEP290/NPHP6. In terms of tissue distribution, expressed in the retina (at protein level).

It localises to the cell projection. The protein localises to the cilium. Functionally, may function as scaffolding protein. Required for normal location of RPGR at the connecting cilium of photoreceptor cells. Required for normal disk morphogenesis and disk organization in the outer segment of photoreceptor cells and for survival of photoreceptor cells. The sequence is that of X-linked retinitis pigmentosa GTPase regulator-interacting protein 1 (Rpgrip1) from Mus musculus (Mouse).